Here is a 123-residue protein sequence, read N- to C-terminus: ATP synthase epsilon chain (123 aa).

The protein belongs to the ATPase epsilon chain family. As to quaternary structure, F-type ATPases have 2 components, CF(1) - the catalytic core - and CF(0) - the membrane proton channel. CF(1) has five subunits: alpha(3), beta(3), gamma(1), delta(1), epsilon(1). CF(0) has three main subunits: a, b and c.

It is found in the cell inner membrane. In terms of biological role, produces ATP from ADP in the presence of a proton gradient across the membrane. The polypeptide is ATP synthase epsilon chain (atpC) (Helicobacter pylori (strain ATCC 700392 / 26695) (Campylobacter pylori)).